Here is a 62-residue protein sequence, read N- to C-terminus: Large ribosomal subunit protein uL29 (62 aa).

Belongs to the universal ribosomal protein uL29 family.

The chain is Large ribosomal subunit protein uL29 from Amoebophilus asiaticus (strain 5a2).